Reading from the N-terminus, the 698-residue chain is Serine/threonine-protein kinase Nek8 (698 aa).

One can recognise a Protein kinase domain in the interval 4–258; sequence YERIRVVGRG…LSHIMAQPLC (255 aa). ATP is bound by residues 10–18 and Lys-33; that span reads VGRGAFGIV. Asp-128 acts as the Proton acceptor in catalysis. Residue Thr-162 is modified to Phosphothreonine; by autocatalysis. Residues 281 to 307 are disordered; the sequence is LTPGTPMAPGSTGSRATSARCRGVPRG. 5 RCC1 repeats span residues 415–466, 467–518, 520–571, 585–636, and 638–689; these read RGII…ALSA, DGEL…ILTS, GRVL…TLLC, SGAC…AIGA, and GEVY…LAVR.

The protein belongs to the protein kinase superfamily. NEK Ser/Thr protein kinase family. NIMA subfamily. Interacts with PKD2; may regulate PKD2 targeting to the cilium. Interacts with ANKS6. Component of a complex containing at least ANKS6, INVS, NEK8 and NPHP3. ANKS6 may organize complex assembly by linking INVS and NPHP3 to NEK8 and INVS may target it to the proximal ciliary axoneme. Interacts with ANKS3. The cofactor is Mg(2+).

The protein localises to the cytoplasm. It localises to the cytoskeleton. The protein resides in the cell projection. Its subcellular location is the cilium. It is found in the cilium axoneme. The protein localises to the microtubule organizing center. It localises to the centrosome. It carries out the reaction L-seryl-[protein] + ATP = O-phospho-L-seryl-[protein] + ADP + H(+). The enzyme catalyses L-threonyl-[protein] + ATP = O-phospho-L-threonyl-[protein] + ADP + H(+). In terms of biological role, required for renal tubular integrity. May regulate local cytoskeletal structure in kidney tubule epithelial cells. May regulate ciliary biogenesis through targeting of proteins to the cilia. Plays a role in organogenesis and is involved in the regulation of the Hippo signaling pathway. This Rattus norvegicus (Rat) protein is Serine/threonine-protein kinase Nek8 (Nek8).